A 71-amino-acid polypeptide reads, in one-letter code: Plasticin-C2 (71 aa).

The first 22 residues, 1–22, serve as a signal peptide directing secretion; sequence MAFLKKSLLLVLFLALVPLSIC. Positions 23 to 45 are excised as a propeptide; it reads EEEKREEEDEEKQEDDDQSENKR. The segment at 25–46 is disordered; that stretch reads EKREEEDEEKQEDDDQSENKRG. A compositionally biased stretch (acidic residues) spans 26–40; it reads KREEEDEEKQEDDDQ. Asparagine amide is present on N68. Residues 70-71 constitute a propeptide that is removed on maturation; that stretch reads ES.

It belongs to the frog skin active peptide (FSAP) family. Plasticin subfamily. As to expression, expressed by the skin glands.

The protein localises to the secreted. It is found in the target cell membrane. In terms of biological role, neutral peptide with no antimicrobial activity. May act in synergy with cationic peptides by enhancing their activity. Has a moderate hemolytic activity. The protein is Plasticin-C2 of Agalychnis callidryas (Red-eyed tree frog).